The sequence spans 553 residues: Arginine--tRNA ligase (553 aa).

The 'HIGH' region signature appears at 130-140 (ANPTGDLHIGH).

It belongs to the class-I aminoacyl-tRNA synthetase family. In terms of assembly, monomer.

Its subcellular location is the cytoplasm. The enzyme catalyses tRNA(Arg) + L-arginine + ATP = L-arginyl-tRNA(Arg) + AMP + diphosphate. The sequence is that of Arginine--tRNA ligase from Staphylococcus aureus (strain bovine RF122 / ET3-1).